The primary structure comprises 333 residues: Holliday junction branch migration complex subunit RuvB (333 aa).

The large ATPase domain (RuvB-L) stretch occupies residues 1–182 (MDERLLSGES…FGVLSRLEYY (182 aa)). Residues L21, R22, G63, K66, T67, T68, 129 to 131 (EDF), R172, Y182, and R219 contribute to the ATP site. A Mg(2+)-binding site is contributed by T67. The interval 183 to 253 (TVDQLSEIVE…ITQMALELLQ (71 aa)) is small ATPAse domain (RuvB-S). The segment at 256–333 (KLGLDHIDHK…EHFGMEMPKV (78 aa)) is head domain (RuvB-H). DNA contacts are provided by R311 and R316.

It belongs to the RuvB family. As to quaternary structure, homohexamer. Forms an RuvA(8)-RuvB(12)-Holliday junction (HJ) complex. HJ DNA is sandwiched between 2 RuvA tetramers; dsDNA enters through RuvA and exits via RuvB. An RuvB hexamer assembles on each DNA strand where it exits the tetramer. Each RuvB hexamer is contacted by two RuvA subunits (via domain III) on 2 adjacent RuvB subunits; this complex drives branch migration. In the full resolvosome a probable DNA-RuvA(4)-RuvB(12)-RuvC(2) complex forms which resolves the HJ.

The protein localises to the cytoplasm. It carries out the reaction ATP + H2O = ADP + phosphate + H(+). Its function is as follows. The RuvA-RuvB-RuvC complex processes Holliday junction (HJ) DNA during genetic recombination and DNA repair, while the RuvA-RuvB complex plays an important role in the rescue of blocked DNA replication forks via replication fork reversal (RFR). RuvA specifically binds to HJ cruciform DNA, conferring on it an open structure. The RuvB hexamer acts as an ATP-dependent pump, pulling dsDNA into and through the RuvAB complex. RuvB forms 2 homohexamers on either side of HJ DNA bound by 1 or 2 RuvA tetramers; 4 subunits per hexamer contact DNA at a time. Coordinated motions by a converter formed by DNA-disengaged RuvB subunits stimulates ATP hydrolysis and nucleotide exchange. Immobilization of the converter enables RuvB to convert the ATP-contained energy into a lever motion, pulling 2 nucleotides of DNA out of the RuvA tetramer per ATP hydrolyzed, thus driving DNA branch migration. The RuvB motors rotate together with the DNA substrate, which together with the progressing nucleotide cycle form the mechanistic basis for DNA recombination by continuous HJ branch migration. Branch migration allows RuvC to scan DNA until it finds its consensus sequence, where it cleaves and resolves cruciform DNA. This chain is Holliday junction branch migration complex subunit RuvB, found in Bacillus cereus (strain ATCC 10987 / NRS 248).